The sequence spans 424 residues: CinA-like protein (424 aa).

It belongs to the CinA family.

The sequence is that of CinA-like protein from Shewanella denitrificans (strain OS217 / ATCC BAA-1090 / DSM 15013).